A 119-amino-acid polypeptide reads, in one-letter code: UPF0102 protein PM0647 (119 aa).

Belongs to the UPF0102 family.

This chain is UPF0102 protein PM0647, found in Pasteurella multocida (strain Pm70).